Consider the following 233-residue polypeptide: PEP2-like protein NECHADRAFT_97050 (233 aa).

It belongs to the PEP2 family.

In terms of biological role, may contribute to the ability of the fungus to cause disease on pea plants. This is PEP2-like protein NECHADRAFT_97050 from Fusarium vanettenii (strain ATCC MYA-4622 / CBS 123669 / FGSC 9596 / NRRL 45880 / 77-13-4) (Fusarium solani subsp. pisi).